The chain runs to 216 residues: PRA1 family protein B6 (216 aa).

A2 is modified (N-acetylalanine). 5 helical membrane passes run 83-103 (LVAI…FLLA), 105-125 (LAAS…LVIG), 135-155 (LGIL…GSLL), 159-179 (LAVG…EDLF), and 186-206 (IGSG…AAAI).

The protein belongs to the PRA1 family. Interacts with PRA1B1, PRA1B2, PRA1B3, PRA1B4, PRA1B5 and PRA1E. As to expression, expressed in hypocotyls, roots, lateral roots, lateral root caps, columella cells, leaves and stomata.

Its subcellular location is the endoplasmic reticulum membrane. Functionally, may be involved in both secretory and endocytic intracellular trafficking in the endosomal/prevacuolar compartments. The polypeptide is PRA1 family protein B6 (PRA1B6) (Arabidopsis thaliana (Mouse-ear cress)).